The sequence spans 225 residues: Uridylate kinase (225 aa).

ATP is bound at residue 9-10 (GS). Gly44 serves as a coordination point for UMP. Positions 45 and 49 each coordinate ATP. Residues Asp66 and 114-120 (THPGHTT) contribute to the UMP site. 4 residues coordinate ATP: Thr140, Asn141, Tyr146, and Asp149.

Belongs to the UMP kinase family. As to quaternary structure, homohexamer.

Its subcellular location is the cytoplasm. The enzyme catalyses UMP + ATP = UDP + ADP. It functions in the pathway pyrimidine metabolism; CTP biosynthesis via de novo pathway; UDP from UMP (UMPK route): step 1/1. Its activity is regulated as follows. Inhibited by UTP. Its function is as follows. Catalyzes the reversible phosphorylation of UMP to UDP. This Thermococcus onnurineus (strain NA1) protein is Uridylate kinase.